The following is a 389-amino-acid chain: Multidrug resistance protein 1 (389 aa).

11 consecutive transmembrane segments (helical) span residues 6 to 26 (ITLT…GLVI), 42 to 62 (AVGY…PIAG), 71 to 91 (KIMI…FGIG), 102 to 122 (MLGG…IADI), 134 to 154 (YMSA…GFLA), 160 to 180 (LPFF…ILTL), 202 to 222 (IFAP…FGLA), 243 to 263 (IAIM…VLFD), 286 to 306 (VFLL…VTVF), 336 to 356 (SMFT…LFDI), and 358 to 378 (VNYP…LTIA).

The protein belongs to the major facilitator superfamily. TCR/Tet family.

The protein localises to the cell membrane. In terms of biological role, energy-dependent efflux pump responsible for decreased drug accumulation in multi-drug-resistant cells. Probably uses a transmembrane proton gradient as the energy source. Causes the efflux of a variety of toxic substances, including such structurally diverse compounds as ethidium bromide, rhodamine and acridine dyes, tetraphenylphosphonium, puromycin, chloramphenicol, doxorubicin, and fluoroquinolone antibiotics. This chain is Multidrug resistance protein 1 (bmr), found in Bacillus subtilis (strain 168).